Reading from the N-terminus, the 92-residue chain is Neuropeptide ShK-like2 (92 aa).

Residues Met-1 to Ala-23 form the signal peptide. A propeptide spanning residues Arg-24–Arg-51 is cleaved from the precursor. Intrachain disulfides connect Cys-53–Cys-92, Cys-61–Cys-85, and Cys-70–Cys-89.

In terms of tissue distribution, transcripts are first expressed mostly in the endoderm (with rare ectodermal cells) in the late planulae. They are mostly expressed in endodermal ganglion cells in the body column and tentacles in primary polyps, as well as in a small number of ectodermal sensory neurons in tentacles and body wall. They are not expressed in nematocytes. Transcripts are predominantly expressed in ectodermal sensory neurons in early and late planulae. They are expressed in endodermal ganglion cells in the body column and tentacles in primary polyps, as well as in a small number of ectodermal neurons in pharynx. They are not expressed in nematocytes.

In terms of biological role, in vivo, this neuropeptide induces contraction paralysis followed by death (within 2 hours) on 4 zebrafish larvae on the 15 tested. Also induces body contraction in Nematostella 11-dpf polyps. This chain is Neuropeptide ShK-like2, found in Nematostella vectensis (Starlet sea anemone).